Reading from the N-terminus, the 185-residue chain is Putative RNA (cytidine(34)-2'-O)-methyltransferase (185 aa).

S-adenosyl-L-methionine-binding residues include isoleucine 80, glycine 105, and isoleucine 126.

It belongs to the class IV-like SAM-binding methyltransferase superfamily. RNA methyltransferase TrmH family. TrmL subfamily.

Its subcellular location is the cytoplasm. It carries out the reaction cytidine(34) in tRNA + S-adenosyl-L-methionine = 2'-O-methylcytidine(34) in tRNA + S-adenosyl-L-homocysteine + H(+). The enzyme catalyses 5-carboxymethylaminomethyluridine(34) in tRNA(Leu) + S-adenosyl-L-methionine = 5-carboxymethylaminomethyl-2'-O-methyluridine(34) in tRNA(Leu) + S-adenosyl-L-homocysteine + H(+). In terms of biological role, could methylate the ribose at the nucleotide 34 wobble position in tRNA. The chain is Putative RNA (cytidine(34)-2'-O)-methyltransferase from Lactobacillus gasseri (strain ATCC 33323 / DSM 20243 / BCRC 14619 / CIP 102991 / JCM 1131 / KCTC 3163 / NCIMB 11718 / NCTC 13722 / AM63).